Reading from the N-terminus, the 132-residue chain is Proline-rich protein sgp2 (132 aa).

A signal peptide spans 1–20 (MKYCFVFFVTLICLIANCSA). 2 disordered regions span residues 23 to 62 (EGDKGLSAAPTDGKQIERASDKTSEENDGNTNAQGDSNSR) and 87 to 132 (GASV…LGLP). Residues 36-47 (KQIERASDKTSE) show a composition bias toward basic and acidic residues. Over residues 51-62 (GNTNAQGDSNSR) the composition is skewed to polar residues. Low complexity predominate over residues 91 to 105 (PQLPDLPTTPSLPDM).

The protein resides in the secreted. The protein is Proline-rich protein sgp2 (sgp2) of Glossina morsitans morsitans (Savannah tsetse fly).